Consider the following 613-residue polypeptide: Protein CER1-like 2 (613 aa).

Helical transmembrane passes span 13-33 (WTPL…DSIY), 44-64 (LLIV…ISLS), 95-115 (IIFN…TSTI), 122-142 (GVIL…YWFH), 182-202 (LILG…VVSI), and 322-342 (YLFL…SFSF). The Fatty acid hydroxylase domain occupies 134–268 (VEFIYYWFHR…MPMYDYIYGT (135 aa)).

The protein belongs to the sterol desaturase family. As to expression, not detected in any tissues.

Its subcellular location is the membrane. The sequence is that of Protein CER1-like 2 from Arabidopsis thaliana (Mouse-ear cress).